The primary structure comprises 307 residues: L-carnitine dehydrogenase (307 aa).

8-13 lines the NAD(+) pocket; sequence GTGVIG.

The protein belongs to the 3-hydroxyacyl-CoA dehydrogenase family. L-carnitine dehydrogenase subfamily. Homodimer.

It localises to the cytoplasm. The catalysed reaction is carnitine + NAD(+) = 3-dehydrocarnitine + NADH + H(+). It functions in the pathway amine and polyamine metabolism; carnitine metabolism. Its function is as follows. Catalyzes the NAD(+)-dependent oxidation of L-carnitine to 3-dehydrocarnitine. The sequence is that of L-carnitine dehydrogenase from Oceanobacillus iheyensis (strain DSM 14371 / CIP 107618 / JCM 11309 / KCTC 3954 / HTE831).